We begin with the raw amino-acid sequence, 307 residues long: MVTSSSSPPLATSQLPVMKGEEKPSNWAELPPDLLSSILLRLSPLEILENARKVCRSWRRVSKDPLIWRRIDMRNLRRLYCIYAMEACCRHVVDLSQGGLLEFNIDQWRFQTTSLLNYMAERSSNLRRLRVKGGQITSVGIFEAIVKLPLLEELELLYCSIEEEHFKTIGQACPNLKTLKLVGFWSHLNESDNDALAIADTMPGLLHLQLISNGLTNIGLNAILDGCPHLECLDLRQCFNINLFGDLERQCLERIKDFRCPNDVLDDYNYVIFSDNGSIEDEKGEEEENYSYGSDDTEYGYRRSADF.

Over residues 1-15 (MVTSSSSPPLATSQL) the composition is skewed to polar residues. A disordered region spans residues 1–26 (MVTSSSSPPLATSQLPVMKGEEKPSN). Residues 24 to 71 (PSNWAELPPDLLSSILLRLSPLEILENARKVCRSWRRVSKDPLIWRRI) form the F-box domain. 5 LRR repeats span residues 108-133 (WRFQ…RVKG), 158-183 (YCSI…KLVG), 185-210 (WSHL…HLQL), 212-237 (SNGL…DLRQ), and 244-270 (FGDL…DYNY). Residues 279-289 (IEDEKGEEEEN) show a composition bias toward acidic residues. The segment at 279 to 307 (IEDEKGEEEENYSYGSDDTEYGYRRSADF) is disordered.

This Arabidopsis thaliana (Mouse-ear cress) protein is Putative F-box/LRR-repeat protein 22 (FBL22).